The following is a 187-amino-acid chain: UPF0340 protein SPD_0576 (187 aa).

The protein belongs to the UPF0340 family.

The protein is UPF0340 protein SPD_0576 of Streptococcus pneumoniae serotype 2 (strain D39 / NCTC 7466).